Here is a 126-residue protein sequence, read N- to C-terminus: Large ribosomal subunit protein bL12 (126 aa).

Belongs to the bacterial ribosomal protein bL12 family. As to quaternary structure, homodimer. Part of the ribosomal stalk of the 50S ribosomal subunit. Forms a multimeric L10(L12)X complex, where L10 forms an elongated spine to which 2 to 4 L12 dimers bind in a sequential fashion. Binds GTP-bound translation factors.

Forms part of the ribosomal stalk which helps the ribosome interact with GTP-bound translation factors. Is thus essential for accurate translation. The polypeptide is Large ribosomal subunit protein bL12 (Nitrosospira multiformis (strain ATCC 25196 / NCIMB 11849 / C 71)).